A 496-amino-acid polypeptide reads, in one-letter code: Lysine--tRNA ligase (496 aa).

Residues Glu-409 and Glu-416 each coordinate Mg(2+).

Belongs to the class-II aminoacyl-tRNA synthetase family. Homodimer. Requires Mg(2+) as cofactor.

The protein localises to the cytoplasm. The enzyme catalyses tRNA(Lys) + L-lysine + ATP = L-lysyl-tRNA(Lys) + AMP + diphosphate. This chain is Lysine--tRNA ligase, found in Streptococcus pneumoniae serotype 19F (strain G54).